Here is a 532-residue protein sequence, read N- to C-terminus: Flavin-containing monooxygenase 1 (532 aa).

Residue Ala2 is modified to N-acetylalanine. Over 2-510 (AKRVAIVGAG…TRIVKESPSP (509 aa)) the chain is Lumenal. Residues 9-13 (GAGVS), Glu32, 40-41 (LW), and 61-62 (NS) each bind FAD. 60–61 (SN) provides a ligand contact to NADP(+). The N-linked (GlcNAc...) (high mannose) asparagine glycan is linked to Asn120. 195 to 198 (SGTD) contacts NADP(+). A helical membrane pass occupies residues 511–531 (FASLLKLFSFLALLVAIFQIF). Leu532 is a topological domain (cytoplasmic).

The protein belongs to the FMO family. The cofactor is FAD. As to expression, liver.

It localises to the endoplasmic reticulum membrane. The catalysed reaction is hypotaurine + NADPH + O2 + H(+) = taurine + NADP(+) + H2O. It carries out the reaction hypotaurine + NADH + O2 + H(+) = taurine + NAD(+) + H2O. It catalyses the reaction trimethylamine + NADPH + O2 = trimethylamine N-oxide + NADP(+) + H2O. The enzyme catalyses N,N-dimethylaniline + NADPH + O2 + H(+) = N,N-dimethylaniline N-oxide + NADP(+) + H2O. Broad spectrum monooxygenase that catalyzes the oxygenation of a wide variety of nitrogen- and sulfur-containing compounds including xenobiotics. Catalyzes the S-oxygenation of hypotaurine to produce taurine, an organic osmolyte involved in cell volume regulation as well as a variety of cytoprotective and developmental processes. In vitro, catalyzes the N-oxygenation of trimethylamine (TMA) to produce trimethylamine N-oxide (TMAO) and could therefore participate to the detoxification of this compound that is generated by the action of gut microbiota from dietary precursors such as choline, choline containing compounds, betaine or L-carnitine. In Sus scrofa (Pig), this protein is Flavin-containing monooxygenase 1 (FMO1).